The sequence spans 317 residues: Carbamate kinase (317 aa).

The protein belongs to the carbamate kinase family. As to quaternary structure, homodimer.

The enzyme catalyses hydrogencarbonate + NH4(+) + ATP = carbamoyl phosphate + ADP + H2O + H(+). Its pathway is metabolic intermediate metabolism; carbamoyl phosphate degradation; CO(2) and NH(3) from carbamoyl phosphate: step 1/1. The chain is Carbamate kinase (CBK) from Giardia intestinalis (Giardia lamblia).